We begin with the raw amino-acid sequence, 743 residues long: Phosphoribosylformylglycinamidine synthase subunit PurL (743 aa).

Histidine 53 is a catalytic residue. Residues tyrosine 56 and lysine 95 each coordinate ATP. Glutamate 97 is a binding site for Mg(2+). Substrate is bound by residues 98–101 (SHNH) and arginine 120. The Proton acceptor role is filled by histidine 99. A Mg(2+)-binding site is contributed by aspartate 121. Residue glutamine 245 coordinates substrate. Aspartate 275 is a binding site for Mg(2+). 319 to 321 (ESQ) is a substrate binding site. 2 residues coordinate ATP: aspartate 502 and glycine 539. Asparagine 540 serves as a coordination point for Mg(2+). A substrate-binding site is contributed by serine 542.

The protein belongs to the FGAMS family. In terms of assembly, monomer. Part of the FGAM synthase complex composed of 1 PurL, 1 PurQ and 2 PurS subunits.

Its subcellular location is the cytoplasm. It catalyses the reaction N(2)-formyl-N(1)-(5-phospho-beta-D-ribosyl)glycinamide + L-glutamine + ATP + H2O = 2-formamido-N(1)-(5-O-phospho-beta-D-ribosyl)acetamidine + L-glutamate + ADP + phosphate + H(+). It participates in purine metabolism; IMP biosynthesis via de novo pathway; 5-amino-1-(5-phospho-D-ribosyl)imidazole from N(2)-formyl-N(1)-(5-phospho-D-ribosyl)glycinamide: step 1/2. Part of the phosphoribosylformylglycinamidine synthase complex involved in the purines biosynthetic pathway. Catalyzes the ATP-dependent conversion of formylglycinamide ribonucleotide (FGAR) and glutamine to yield formylglycinamidine ribonucleotide (FGAM) and glutamate. The FGAM synthase complex is composed of three subunits. PurQ produces an ammonia molecule by converting glutamine to glutamate. PurL transfers the ammonia molecule to FGAR to form FGAM in an ATP-dependent manner. PurS interacts with PurQ and PurL and is thought to assist in the transfer of the ammonia molecule from PurQ to PurL. The polypeptide is Phosphoribosylformylglycinamidine synthase subunit PurL (Lactobacillus helveticus (strain DPC 4571)).